The primary structure comprises 326 residues: Glutaminase 2 (326 aa).

Substrate contacts are provided by Ser-73, Asn-125, Glu-169, Asn-176, Tyr-200, Tyr-252, and Val-270.

The protein belongs to the glutaminase family. In terms of assembly, homotetramer.

The catalysed reaction is L-glutamine + H2O = L-glutamate + NH4(+). This Bacillus anthracis protein is Glutaminase 2.